A 127-amino-acid chain; its full sequence is MPKPFYVKFEVPPELADKVYQAISKVRETGGKIKKGTNETTKAVERGQAKLVVIAEDVDPPEIVAHLPLLCDEKKIPYVYVPSKQKLGQAAGIEVSAASVAVIDVGGAKDLIDEIIKSVQQIRAQSG.

It belongs to the eukaryotic ribosomal protein eL8 family. As to quaternary structure, part of the 50S ribosomal subunit. Probably part of the RNase P complex.

It localises to the cytoplasm. Multifunctional RNA-binding protein that recognizes the K-turn motif in ribosomal RNA, the RNA component of RNase P, box H/ACA, box C/D and box C'/D' sRNAs. The sequence is that of Large ribosomal subunit protein eL8 from Desulfurococcus amylolyticus (strain DSM 18924 / JCM 16383 / VKM B-2413 / 1221n) (Desulfurococcus kamchatkensis).